Here is a 303-residue protein sequence, read N- to C-terminus: Zinc transporter ZIP9-B (303 aa).

A helical membrane pass occupies residues 7–27 (ISLLSLAMLVGCYVSGIIPLA). The N-linked (GlcNAc...) asparagine glycan is linked to Asn29. 5 helical membrane-spanning segments follow: residues 35–55 (LKLV…AVIV), 102–122 (AYIG…DQIG), 142–162 (ITTT…LGAA), 172–192 (LIVF…LVSF), and 206–226 (HLLV…LGLS). The N-linked (GlcNAc...) asparagine glycan is linked to Asn237. The next 2 helical transmembrane spans lie at 240–260 (GVAM…HVLP) and 282–302 (LEVC…IGHQ).

This sequence belongs to the ZIP transporter (TC 2.A.5) family.

The protein resides in the golgi apparatus. It localises to the trans-Golgi network membrane. The protein localises to the cell membrane. It is found in the cytoplasm. Its subcellular location is the perinuclear region. The protein resides in the mitochondrion. It localises to the nucleus. The catalysed reaction is Zn(2+)(in) = Zn(2+)(out). In terms of biological role, transports zinc ions across cell and organelle membranes into the cytoplasm and regulates intracellular zinc homeostasis. Participates in the zinc ions efflux out of the secretory compartments. Regulates intracellular zinc level, resulting in the enhancement of AKT1 and MAPK3/MAPK1 (Erk1/2) phosphorylation in response to the BCR activation. Also functions as a membrane androgen receptor that mediates, through a G protein, the non-classical androgen signaling pathway, characterized by the activation of MAPK3/MAPK1 (Erk1/2) and transcription factors CREB1 or ATF1. Moreover, has dual functions as a membrane-bound androgen receptor and as an androgen-dependent zinc transporter both of which are mediated through an inhibitory G protein (Gi) that mediates both MAP kinase and zinc signaling leading to the androgen-dependent apoptotic process. The sequence is that of Zinc transporter ZIP9-B (slc39a9-b) from Xenopus laevis (African clawed frog).